The primary structure comprises 226 residues: Ribonuclease 3 (226 aa).

In terms of domain architecture, RNase III spans 6-128 (MKKLQKFIGY…IIASIFLDSN (123 aa)). A Mg(2+)-binding site is contributed by Glu-41. Residue Asp-45 is part of the active site. Residues Asn-114 and Glu-117 each coordinate Mg(2+). Residue Glu-117 is part of the active site. Residues 155–225 (DPKTRLQEYL…AQNALIRLEV (71 aa)) form the DRBM domain.

This sequence belongs to the ribonuclease III family. In terms of assembly, homodimer. It depends on Mg(2+) as a cofactor.

Its subcellular location is the cytoplasm. The catalysed reaction is Endonucleolytic cleavage to 5'-phosphomonoester.. In terms of biological role, digests double-stranded RNA. Involved in the processing of primary rRNA transcript to yield the immediate precursors to the large and small rRNAs (23S and 16S). Processes some mRNAs, and tRNAs when they are encoded in the rRNA operon. Processes pre-crRNA and tracrRNA of type II CRISPR loci if present in the organism. The polypeptide is Ribonuclease 3 (Buchnera aphidicola subsp. Cinara cedri (strain Cc)).